Reading from the N-terminus, the 696-residue chain is DNA ligase (696 aa).

NAD(+)-binding positions include 36-40 (DAEYD), 85-86 (SL), and Glu123. Lys125 (N6-AMP-lysine intermediate) is an active-site residue. Residues Arg146, Glu181, Lys319, and Lys343 each contribute to the NAD(+) site. Zn(2+) is bound by residues Cys437, Cys440, Cys455, and Cys461. The 79-residue stretch at 618 to 696 (PEGTSLAGKT…EDGLKALLGL (79 aa)) folds into the BRCT domain.

This sequence belongs to the NAD-dependent DNA ligase family. LigA subfamily. The cofactor is Mg(2+). It depends on Mn(2+) as a cofactor.

It catalyses the reaction NAD(+) + (deoxyribonucleotide)n-3'-hydroxyl + 5'-phospho-(deoxyribonucleotide)m = (deoxyribonucleotide)n+m + AMP + beta-nicotinamide D-nucleotide.. In terms of biological role, DNA ligase that catalyzes the formation of phosphodiester linkages between 5'-phosphoryl and 3'-hydroxyl groups in double-stranded DNA using NAD as a coenzyme and as the energy source for the reaction. It is essential for DNA replication and repair of damaged DNA. The chain is DNA ligase from Bordetella pertussis (strain Tohama I / ATCC BAA-589 / NCTC 13251).